The following is a 225-amino-acid chain: NAD(P)H-quinone oxidoreductase subunit K, chloroplastic (225 aa).

[4Fe-4S] cluster contacts are provided by Cys43, Cys44, Cys108, and Cys139.

This sequence belongs to the complex I 20 kDa subunit family. NDH is composed of at least 16 different subunits, 5 of which are encoded in the nucleus. Requires [4Fe-4S] cluster as cofactor.

The protein localises to the plastid. The protein resides in the chloroplast thylakoid membrane. The enzyme catalyses a plastoquinone + NADH + (n+1) H(+)(in) = a plastoquinol + NAD(+) + n H(+)(out). It catalyses the reaction a plastoquinone + NADPH + (n+1) H(+)(in) = a plastoquinol + NADP(+) + n H(+)(out). In terms of biological role, NDH shuttles electrons from NAD(P)H:plastoquinone, via FMN and iron-sulfur (Fe-S) centers, to quinones in the photosynthetic chain and possibly in a chloroplast respiratory chain. The immediate electron acceptor for the enzyme in this species is believed to be plastoquinone. Couples the redox reaction to proton translocation, and thus conserves the redox energy in a proton gradient. The polypeptide is NAD(P)H-quinone oxidoreductase subunit K, chloroplastic (Manihot esculenta (Cassava)).